We begin with the raw amino-acid sequence, 428 residues long: Putative aminotransferase MSMEG_6286/MSMEI_6121 (428 aa).

Residue Gly37 coordinates substrate. Pyridoxal 5'-phosphate contacts are provided by residues Tyr72, 102-105, Asn191, 222-225, and 256-258; these read ASLE, AYAV, and STS. Lys339 is covalently cross-linked (Isoglutamyl lysine isopeptide (Lys-Gln) (interchain with Q-Cter in protein Pup)).

This sequence belongs to the class-I pyridoxal-phosphate-dependent aminotransferase family. Requires pyridoxal 5'-phosphate as cofactor.

In Mycolicibacterium smegmatis (strain ATCC 700084 / mc(2)155) (Mycobacterium smegmatis), this protein is Putative aminotransferase MSMEG_6286/MSMEI_6121.